Here is a 267-residue protein sequence, read N- to C-terminus: NAD kinase (267 aa).

Asp52 functions as the Proton acceptor in the catalytic mechanism. NAD(+) is bound by residues 52 to 53 (DG), Arg57, 121 to 122 (NE), Arg132, Lys150, Asp152, 163 to 168 (TAYSLS), and Ala187.

Belongs to the NAD kinase family. A divalent metal cation is required as a cofactor.

It is found in the cytoplasm. It carries out the reaction NAD(+) + ATP = ADP + NADP(+) + H(+). In terms of biological role, involved in the regulation of the intracellular balance of NAD and NADP, and is a key enzyme in the biosynthesis of NADP. Catalyzes specifically the phosphorylation on 2'-hydroxyl of the adenosine moiety of NAD to yield NADP. This is NAD kinase from Fusobacterium nucleatum subsp. nucleatum (strain ATCC 25586 / DSM 15643 / BCRC 10681 / CIP 101130 / JCM 8532 / KCTC 2640 / LMG 13131 / VPI 4355).